The sequence spans 551 residues: Alkaline/neutral invertase CINV1 (551 aa).

M1 is modified (N-acetylmethionine). Residues S11, S14, S44, and S61 each carry the phosphoserine modification. A disordered region spans residues 50–74 (TGYSRHDGIHDSPRGRSVLDTPLSS). Over residues 53–63 (SRHDGIHDSPR) the composition is skewed to basic and acidic residues. T70 is modified (phosphothreonine). Position 547 is a phosphoserine (S547).

This sequence belongs to the glycosyl hydrolase 100 family. In terms of assembly, forms homohexamers. Interacts with PIP5K9. Interaction with PIP5K9 represses CINV1 activity. Interacts with GRF1, GRF2, GRF3, GRF4, GRF5, GRF6, GRF7, GRF8 and GRF10; these interactions are dependent of the phosphorylation at Ser-547. Phosphorylated at Ser-547 by CPK3 and CPK21. Expressed in radicle, hypocotyls, root tips and vascular cylinder, leaf vasculature, shoot stipules, trichomes, stem, stigma apex and base of siliques.

It localises to the cytoplasm. It is found in the cytosol. The protein resides in the nucleus. The catalysed reaction is Hydrolysis of terminal non-reducing beta-D-fructofuranoside residues in beta-D-fructofuranosides.. Its function is as follows. Cytosolic invertase that specifically cleaves sucrose into glucose and fructose and is involved in the regulation of multiple tissue development including primary root elongation, root hair growth, leaf and silique development, and floral transition. Is involved in osmotic stress-induced inhibition on lateral root growth by controlling the concentration of hexose in cells. May regulate sugar-mediated root development by controlling sucrose catabolism in root cells. Contributes to carbon partitioning and cellulose biosynthesis in seedlings. The polypeptide is Alkaline/neutral invertase CINV1 (Arabidopsis thaliana (Mouse-ear cress)).